The primary structure comprises 616 residues: Bifunctional 2-aminoethylphosphonate cytidylyltransferase/aminotransferase (616 aa).

Positions 1–240 are 2-aminoethylphosphonate cytidylyltransferase; the sequence is MIKQAVILAG…VKNIYPHIVE (240 aa). Residues Leu-8, Gly-10, Gly-11, Lys-25, Thr-83, Thr-88, Glu-104, and Ser-105 each coordinate CMP-(2-aminoethyl)phosphonate. Positions 106 and 136 each coordinate Mg(2+). The CMP-(2-aminoethyl)phosphonate site is built by Asp-136, Lys-153, and Glu-196. Mg(2+) is bound by residues Glu-220 and Asp-222. Residues 250–616 form a 2-aminoethylphosphonate aminotransferase region; it reads EVLLNPGPAT…EYMNGIGVGV (367 aa). Ser-313, Gly-314, Thr-315, Thr-390, Lys-441, and Thr-490 together coordinate pyridoxal 5'-phosphate.

It in the N-terminal section; belongs to the LicC/PntC cytidylyltransferase family. The protein in the C-terminal section; belongs to the class-V pyridoxal-phosphate-dependent aminotransferase family. PhnW subfamily. Homodimer. It depends on Mg(2+) as a cofactor. Zn(2+) serves as cofactor. Pyridoxal 5'-phosphate is required as a cofactor.

It carries out the reaction (2-aminoethyl)phosphonate + CTP = CMP-(2-aminoethyl)phosphonate + diphosphate. It catalyses the reaction (2-aminoethyl)phosphonate + pyruvate = phosphonoacetaldehyde + L-alanine. It functions in the pathway phosphorus metabolism; phosphonate biosynthesis. With respect to regulation, cytidylyltransferase activity is inhibited in the presence of EDTA and is restored by the addition of Mg(2+) or Zn(2+). In terms of biological role, bifunctional transferase involved in the biosynthesis of cell-surface phosphonates. The aminotransferase region catalyzes the transformation of phosphonoacetaldehyde (PnAA) to 2-aminoethylphosphonate (AEP). The cytidylyltransferase region catalyzes the activation of 2-aminoethylphosphonate (AEP) to CMP-2-aminoethylphosphonate (CMP-AEP). Cannot use phosphocholine. Exhibits strong activity towards CTP, limited activity towards ATP and no activity with GTP. This Treponema denticola (strain ATCC 35405 / DSM 14222 / CIP 103919 / JCM 8153 / KCTC 15104) protein is Bifunctional 2-aminoethylphosphonate cytidylyltransferase/aminotransferase.